A 220-amino-acid polypeptide reads, in one-letter code: Large ribosomal subunit protein uL1 (220 aa).

The protein belongs to the universal ribosomal protein uL1 family. Part of the 50S ribosomal subunit.

Its function is as follows. Binds directly to 23S rRNA. The L1 stalk is quite mobile in the ribosome, and is involved in E site tRNA release. Functionally, protein L1 is also a translational repressor protein, it controls the translation of the L11 operon by binding to its mRNA. This is Large ribosomal subunit protein uL1 from Ehrlichia chaffeensis (strain ATCC CRL-10679 / Arkansas).